Reading from the N-terminus, the 53-residue chain is Gene 87 protein (53 aa).

This is Gene 87 protein (87) from Mycobacterium phage L5 (Mycobacteriophage L5).